The primary structure comprises 168 residues: Small ribosomal subunit protein uS9 (168 aa).

Over residues 1 to 15 (MAQNEETTEAVEAEE) the composition is skewed to acidic residues. Positions 1–34 (MAQNEETTEAVEAEETLTSYTSESGAAEAAAPKK) are disordered.

This sequence belongs to the universal ribosomal protein uS9 family.

The sequence is that of Small ribosomal subunit protein uS9 from Arthrobacter sp. (strain FB24).